Here is a 367-residue protein sequence, read N- to C-terminus: Alginate lyase (367 aa).

Positions 1 to 27 (MKTSHLIRITLPGALAAALLASQVSQA) are cleaved as a signal peptide. Substrate is bound by residues 65–66 (SK), 138–139 (HT), and tyrosine 256.

Belongs to the polysaccharide lyase 5 family.

The protein localises to the periplasm. It catalyses the reaction Eliminative cleavage of alginate to give oligosaccharides with 4-deoxy-alpha-L-erythro-hex-4-enuronosyl groups at their non-reducing ends and beta-D-mannuronate at their reducing end.. Its function is as follows. Catalyzes the depolymerization of alginate by cleaving the beta-1,4 glycosidic bond between two adjacent sugar residues via a beta-elimination mechanism. May serve to degrade mislocalized alginate that is trapped in the periplasmic space. This is Alginate lyase from Pseudomonas paraeruginosa (strain DSM 24068 / PA7) (Pseudomonas aeruginosa (strain PA7)).